The primary structure comprises 537 residues: Lysosomal cobalamin transport escort protein LMBD1 (537 aa).

The Extracellular segment spans residues 1-7 (MAAAAAE). Residues 8-28 (LVIGWCIFGLLLLAILAFCWV) form a helical membrane-spanning segment. Residues 29–47 (YVRKYQSQRESEVVSTVTA) are Cytoplasmic-facing. The helical transmembrane segment at 48-68 (IFSLAVALITSALLPVDIFLV) threads the bilayer. The Extracellular portion of the chain corresponds to 69-97 (SYMKNQNGTFKDWADANVTVQIENTVLYG). N-linked (GlcNAc...) asparagine glycosylation is found at N75 and N85. The helical transmembrane segment at 98 to 118 (YYTLYSVILFCVFFWIPFVYF) threads the bilayer. The Cytoplasmic segment spans residues 119–141 (YYEEKDEDDASKCTQIKTALKYT). The chain crosses the membrane as a helical span at residues 142-162 (LGFVVICALLLLVGAFVPLHL). Over 163-185 (PNNNNSTEWEKVKLLFEDLGTGQ) the chain is Extracellular. N-linked (GlcNAc...) asparagine glycosylation is found at N166 and N167. The helical transmembrane segment at 186 to 206 (GLAALSFSISSLTLIGMLAAI) threads the bilayer. Residues 207–302 (TYTAYGMSAL…KFCGALRPLK (96 aa)) are Cytoplasmic-facing. The YERL motif; mediates interaction with adapter protein complex 2 and is essential for its function in clathrin-mediated endocytosis of INSR signature appears at 229-232 (YERL). At T235 the chain carries Phosphothreonine. The WTKF motif; mediates interaction with adapter protein complex 2 and is essential for its function in clathrin-mediated endocytosis of INSR motif lies at 291-294 (WTKF). The chain crosses the membrane as a helical span at residues 303–323 (IIWGIFFILVALLFVISLFLS). The Extracellular segment spans residues 324-361 (NLDKALHSAGIDSGFIIFGTNLSNPLNMLLPLLQTVFP). A glycan (N-linked (GlcNAc...) asparagine) is linked at N344. A helical membrane pass occupies residues 362 to 382 (LDYILITIIIMYFIFTSMAGI). Residues 383 to 405 (RNIGIWFFWIRLYKIRRGRTRPQ) lie on the Cytoplasmic side of the membrane. The helical transmembrane segment at 406 to 426 (ALLFLCMILLLIVLHTSYMIY) threads the bilayer. The Extracellular portion of the chain corresponds to 427-483 (SLAPQYVMYGSQNYLIESNITSDAHKGNSTLAVPKRCDADAPKDQCTVTRTYIFLHK). N-linked (GlcNAc...) asparagine glycans are attached at residues N445 and N454. A helical membrane pass occupies residues 484-504 (FWFFSAAYYFGNWAFLVVFLI). At 505–537 (GLIVSCCKGKKSVIEGVDEDSDLSDDEPSAYSA) the chain is on the cytoplasmic side. Phosphoserine is present on residues S525 and S528.

This sequence belongs to the LIMR family. LMBRD1 subfamily. Interacts with ABCD4; this interaction induces the translocation of ABCD4 from the endoplasmic reticulum to the lysosome. Interacts with ABCD4 and MMACHC; this interaction ensures the transport of cobalamin from the lysosome to the cytoplasm. Interacts with INSR, adapter protein complex 2 and clathrin heavy chain. N-glycosylated.

It is found in the endoplasmic reticulum membrane. Its subcellular location is the lysosome membrane. The protein resides in the cell membrane. The protein localises to the cytoplasmic vesicle. It localises to the clathrin-coated vesicle. Lysosomal membrane chaperone required to export cobalamin (vitamin B12) from the lysosome to the cytosol, allowing its conversion to cofactors. Targets ABCD4 transporter from the endoplasmic reticulum to the lysosome. Then forms a complex with lysosomal ABCD4 and cytoplasmic MMACHC to transport cobalamin across the lysosomal membrane. Acts as an adapter protein which plays an important role in mediating and regulating the internalization of the insulin receptor (INSR). Involved in clathrin-mediated endocytosis of INSR via its interaction with adapter protein complex 2. Essential for the initiation of gastrulation and early formation of mesoderm structures during embryogenesis. The polypeptide is Lysosomal cobalamin transport escort protein LMBD1 (Mus musculus (Mouse)).